The primary structure comprises 202 residues: Small ribosomal subunit protein uS5 (202 aa).

Residues 1-13 (MPGQQRRGGGSGG) are compositionally biased toward gly residues. The tract at residues 1 to 31 (MPGQQRRGGGSGGSDRRERRDRSGGGPAQEK) is disordered. A compositionally biased stretch (basic and acidic residues) spans 14-23 (SDRRERRDRS). The S5 DRBM domain maps to 34-97 (YVERVVAINR…EEAKKHFFKV (64 aa)).

It belongs to the universal ribosomal protein uS5 family. In terms of assembly, part of the 30S ribosomal subunit. Contacts proteins S4 and S8.

Its function is as follows. With S4 and S12 plays an important role in translational accuracy. Located at the back of the 30S subunit body where it stabilizes the conformation of the head with respect to the body. This Parafrankia sp. (strain EAN1pec) protein is Small ribosomal subunit protein uS5.